Here is a 200-residue protein sequence, read N- to C-terminus: Large ribosomal subunit protein uL4 (200 aa).

A disordered region spans residues 38-73 (GRQGTKGQKSRSDVSGGGKRPWRQKGTGRARAGTTR).

The protein belongs to the universal ribosomal protein uL4 family. Part of the 50S ribosomal subunit.

Its function is as follows. One of the primary rRNA binding proteins, this protein initially binds near the 5'-end of the 23S rRNA. It is important during the early stages of 50S assembly. It makes multiple contacts with different domains of the 23S rRNA in the assembled 50S subunit and ribosome. Forms part of the polypeptide exit tunnel. The polypeptide is Large ribosomal subunit protein uL4 (Ectopseudomonas mendocina (strain ymp) (Pseudomonas mendocina)).